The following is a 147-amino-acid chain: Ribosome-binding factor A (147 aa).

Positions 127-147 (AAEARHAGEPDPYKTDRDDAE) are disordered.

Belongs to the RbfA family. As to quaternary structure, monomer. Binds 30S ribosomal subunits, but not 50S ribosomal subunits or 70S ribosomes.

It localises to the cytoplasm. Functionally, one of several proteins that assist in the late maturation steps of the functional core of the 30S ribosomal subunit. Associates with free 30S ribosomal subunits (but not with 30S subunits that are part of 70S ribosomes or polysomes). Required for efficient processing of 16S rRNA. May interact with the 5'-terminal helix region of 16S rRNA. This Nocardia farcinica (strain IFM 10152) protein is Ribosome-binding factor A.